Here is a 291-residue protein sequence, read N- to C-terminus: Acetyl-coenzyme A carboxylase carboxyl transferase subunit beta (291 aa).

The CoA carboxyltransferase N-terminal domain occupies 23-291; the sequence is VWHKCPSCTA…PPDLPVEESV (269 aa). Zn(2+) is bound by residues C27, C30, C46, and C49. Residues 27–49 form a C4-type zinc finger; that stretch reads CPSCTAVLYRVELERNLEVCPKC.

Belongs to the AccD/PCCB family. In terms of assembly, acetyl-CoA carboxylase is a heterohexamer composed of biotin carboxyl carrier protein (AccB), biotin carboxylase (AccC) and two subunits each of ACCase subunit alpha (AccA) and ACCase subunit beta (AccD). Zn(2+) serves as cofactor.

Its subcellular location is the cytoplasm. It carries out the reaction N(6)-carboxybiotinyl-L-lysyl-[protein] + acetyl-CoA = N(6)-biotinyl-L-lysyl-[protein] + malonyl-CoA. The protein operates within lipid metabolism; malonyl-CoA biosynthesis; malonyl-CoA from acetyl-CoA: step 1/1. Its function is as follows. Component of the acetyl coenzyme A carboxylase (ACC) complex. Biotin carboxylase (BC) catalyzes the carboxylation of biotin on its carrier protein (BCCP) and then the CO(2) group is transferred by the transcarboxylase to acetyl-CoA to form malonyl-CoA. The sequence is that of Acetyl-coenzyme A carboxylase carboxyl transferase subunit beta from Coxiella burnetii (strain RSA 331 / Henzerling II).